The following is a 129-amino-acid chain: Small ribosomal subunit protein uS11 (129 aa).

This sequence belongs to the universal ribosomal protein uS11 family. In terms of assembly, part of the 30S ribosomal subunit. Interacts with proteins S7 and S18. Binds to IF-3.

In terms of biological role, located on the platform of the 30S subunit, it bridges several disparate RNA helices of the 16S rRNA. Forms part of the Shine-Dalgarno cleft in the 70S ribosome. The polypeptide is Small ribosomal subunit protein uS11 (Nitratidesulfovibrio vulgaris (strain ATCC 29579 / DSM 644 / CCUG 34227 / NCIMB 8303 / VKM B-1760 / Hildenborough) (Desulfovibrio vulgaris)).